The primary structure comprises 346 residues: NADH-ubiquinone oxidoreductase chain 2 (346 aa).

11 helical membrane-spanning segments follow: residues 1-21 (MSPY…MLIS), 26-46 (WVFM…ILVW), 60-80 (FIVQ…SLSG), 96-116 (MMIM…YWVV), 122-142 (LNYI…LAVL), 151-171 (SSML…GGLG), 178-198 (LLAF…VAGS), 199-219 (LLGL…FSIL), 242-262 (VLLG…GFFG), 274-294 (LLLG…FYYL), and 320-340 (LSGL…LVGG).

Belongs to the complex I subunit 2 family.

Its subcellular location is the mitochondrion inner membrane. The catalysed reaction is a ubiquinone + NADH + 5 H(+)(in) = a ubiquinol + NAD(+) + 4 H(+)(out). Functionally, core subunit of the mitochondrial membrane respiratory chain NADH dehydrogenase (Complex I) that is believed to belong to the minimal assembly required for catalysis. Complex I functions in the transfer of electrons from NADH to the respiratory chain. The immediate electron acceptor for the enzyme is believed to be ubiquinone. The protein is NADH-ubiquinone oxidoreductase chain 2 (ND2) of Branchiostoma lanceolatum (Common lancelet).